Reading from the N-terminus, the 258-residue chain is Chymotrypsin-like elastase family member 1 (258 aa).

Residues 1 to 8 (MLVLYGHS) form the signal peptide. The propeptide at 9–18 (TQDLPETNAR) is activation peptide. The Peptidase S1 domain occupies 19 to 256 (VVGGTEAGRN…YISWINNVIA (238 aa)). Cys48 and Cys64 are disulfide-bonded. His63 functions as the Charge relay system in the catalytic mechanism. Positions 77, 79, 82, and 87 each coordinate Ca(2+). Residue Asn79 is glycosylated (N-linked (GlcNAc...) asparagine). Asp111 (charge relay system) is an active-site residue. 3 cysteine pairs are disulfide-bonded: Cys145–Cys212, Cys176–Cys192, and Cys202–Cys232. Residue Ser206 is the Charge relay system of the active site. The N-linked (GlcNAc...) asparagine glycan is linked to Asn233.

The protein belongs to the peptidase S1 family. Elastase subfamily. Ca(2+) serves as cofactor. As to expression, basal layers of epidermis (at protein level). Not expressed in the pancreas.

The protein resides in the secreted. The catalysed reaction is Hydrolysis of proteins, including elastin. Preferential cleavage: Ala-|-Xaa.. Functionally, serine proteases that hydrolyze many proteins in addition to elastin. The chain is Chymotrypsin-like elastase family member 1 (CELA1) from Homo sapiens (Human).